Here is a 543-residue protein sequence, read N- to C-terminus: CTP synthase (543 aa).

The tract at residues 1–265 (MTRYIFVTGG…DDFVVERFGL (265 aa)) is amidoligase domain. S13 lines the CTP pocket. S13 provides a ligand contact to UTP. ATP is bound by residues 14–19 (SLGKGI) and D71. Residues D71 and E139 each coordinate Mg(2+). Residues 146–148 (DIE), 186–191 (KTKPTQ), and K222 each bind CTP. Residues 186 to 191 (KTKPTQ) and K222 contribute to the UTP site. The Glutamine amidotransferase type-1 domain occupies 290–541 (TIAMVGKYME…VKAALAQHQK (252 aa)). An L-glutamine-binding site is contributed by G351. The active-site Nucleophile; for glutamine hydrolysis is C378. L-glutamine is bound by residues 379-382 (LGMQ), E402, and R469. Residues H514 and E516 contribute to the active site.

It belongs to the CTP synthase family. As to quaternary structure, homotetramer.

It catalyses the reaction UTP + L-glutamine + ATP + H2O = CTP + L-glutamate + ADP + phosphate + 2 H(+). It carries out the reaction L-glutamine + H2O = L-glutamate + NH4(+). The enzyme catalyses UTP + NH4(+) + ATP = CTP + ADP + phosphate + 2 H(+). The protein operates within pyrimidine metabolism; CTP biosynthesis via de novo pathway; CTP from UDP: step 2/2. Its activity is regulated as follows. Allosterically activated by GTP, when glutamine is the substrate; GTP has no effect on the reaction when ammonia is the substrate. The allosteric effector GTP functions by stabilizing the protein conformation that binds the tetrahedral intermediate(s) formed during glutamine hydrolysis. Inhibited by the product CTP, via allosteric rather than competitive inhibition. Functionally, catalyzes the ATP-dependent amination of UTP to CTP with either L-glutamine or ammonia as the source of nitrogen. Regulates intracellular CTP levels through interactions with the four ribonucleotide triphosphates. In Pseudomonas fluorescens (strain Pf0-1), this protein is CTP synthase.